A 125-amino-acid chain; its full sequence is Large ribosomal subunit protein bL20 (125 aa).

The protein belongs to the bacterial ribosomal protein bL20 family.

Binds directly to 23S ribosomal RNA and is necessary for the in vitro assembly process of the 50S ribosomal subunit. It is not involved in the protein synthesizing functions of that subunit. This is Large ribosomal subunit protein bL20 from Rhizorhabdus wittichii (strain DSM 6014 / CCUG 31198 / JCM 15750 / NBRC 105917 / EY 4224 / RW1) (Sphingomonas wittichii).